The sequence spans 276 residues: Large ribosomal subunit protein uL2c (276 aa).

The segment at valine 223–alanine 254 is disordered.

Belongs to the universal ribosomal protein uL2 family. As to quaternary structure, part of the 50S ribosomal subunit.

Its subcellular location is the plastid. The protein resides in the chloroplast. This chain is Large ribosomal subunit protein uL2c (rpl2), found in Emiliania huxleyi (Coccolithophore).